The primary structure comprises 263 residues: Homeobox protein CDX-1 (263 aa).

The interval 47 to 108 (PGINSDPHHG…VQPPGSGLLP (62 aa)) is disordered. Over residues 82–97 (SSANPTQIAFSPSDYN) the composition is skewed to polar residues. A DNA-binding region (homeobox) is located at residues 150 to 209 (KDKYRVVYTDHQRLELEKEFHYSRYITIRRKAELAAALGLTERQVKIWFQNRRAKERKVN). An interaction with DNA region spans residues 153-174 (YRVVYTDHQRLELEKEFHYSRY). Residues 192–203 (RQVKIWFQNRRA) form an interaction with 5-mCpG DNA region. Basic residues predominate over residues 204-213 (KERKVNKKKM). The interval 204–263 (KERKVNKKKMQQQSQQASTTTPTPPSVGTTAGMGGLCSSSSSNSNLVSPSSMPIKEEYLS) is disordered. 2 stretches are compositionally biased toward low complexity: residues 214-233 (QQQS…VGTT) and 241-254 (SSSS…SPSS).

This sequence belongs to the Caudal homeobox family.

The protein localises to the nucleus. In terms of biological role, plays a role in transcriptional regulation. Involved in activated KRAS-mediated transcriptional activation of PRKD1. Binds to the PRKD1 promoter. Could play a role in the terminal differentiation of the intestine. Binds preferentially to methylated DNA. The chain is Homeobox protein CDX-1 (cdx1) from Xenopus laevis (African clawed frog).